The sequence spans 632 residues: ATP-dependent zinc metalloprotease FtsH (632 aa).

The Cytoplasmic portion of the chain corresponds to 1-9 (MKPTNEPKK). Residues 10 to 30 (PFFQSPIILAVLGGILLIFFL) form a helical membrane-spanning segment. Residues 31-116 (RSFNSDGSFS…INYSGFSESN (86 aa)) lie on the Periplasmic side of the membrane. The helical transmembrane segment at 117–137 (FFTDMLGWLMPILVILGLWMF) threads the bilayer. At 138-632 (MANRMQKNMG…RLIPLEEQAS (495 aa)) the chain is on the cytoplasmic side. Residues A173, 213 to 217 (GTGKT), and H354 contribute to the ATP site. Zn(2+) is bound at residue H434. E435 is a catalytic residue. H438 and D511 together coordinate Zn(2+).

In the central section; belongs to the AAA ATPase family. This sequence in the C-terminal section; belongs to the peptidase M41 family. Homohexamer. Requires Zn(2+) as cofactor.

It is found in the cell inner membrane. Its function is as follows. Acts as a processive, ATP-dependent zinc metallopeptidase for both cytoplasmic and membrane proteins. Plays a role in the quality control of integral membrane proteins. The sequence is that of ATP-dependent zinc metalloprotease FtsH from Helicobacter pylori (strain ATCC 700392 / 26695) (Campylobacter pylori).